The primary structure comprises 1093 residues: Probable cellulose synthase A catalytic subunit 3 [UDP-forming] (1093 aa).

Residues 1 to 280 lie on the Cytoplasmic side of the membrane; sequence MEASAGLVAG…PSSQINPYRM (280 aa). Residues C39, C42, C58, C61, C66, C69, C81, and C84 each coordinate Zn(2+). The RING-type; degenerate zinc finger occupies 39–85; sequence CQICGDDVGLNPDGEPFVACNECAFPVCRDCYEYERREGTQNCPQCK. The span at 233–246 shows a compositional bias: basic and acidic residues; that stretch reads LHQMRNDGGGKDWD. Residues 233–257 are disordered; the sequence is LHQMRNDGGGKDWDGDGDDGDLPLM. A helical transmembrane segment spans residues 281-301; sequence VIIIRLVVLGFFFHYRVMHPV. Residues 302 to 303 are Extracellular-facing; the sequence is PD. Residues 304–324 form a helical membrane-spanning segment; the sequence is AFALWLISVICEIWFAMSWIL. Residues 325-869 are Cytoplasmic-facing; that stretch reads DQFPKWFPIE…CLERFSYINS (545 aa). UDP-alpha-D-glucose contacts are provided by S363, K369, E370, and D399. D399 is an active-site residue. A coiled-coil region spans residues 453 to 480; it reads VRERRAMKREYEEFKVRINALVAKAQKV. K540 provides a ligand contact to UDP-alpha-D-glucose. 2 residues coordinate Mn(2+): K541 and D565. The active site involves D793. Residues 870-890 form a helical membrane-spanning segment; that stretch reads IVYPFTSIPLLAYCTLPAICL. The Extracellular segment spans residues 891-902; sequence LTGKFITPELTN. Residues 903-923 form a helical membrane-spanning segment; sequence VASLWFMSLFICIFATGILEM. Residues 924-939 lie on the Cytoplasmic side of the membrane; it reads RWSGVGIDDWWRNEQF. The chain crosses the membrane as a helical span at residues 940–960; the sequence is WVIGGVSSHLFALFQGLLKVI. Topologically, residues 961–988 are extracellular; it reads AGIDTSFTVTSKGGDDEEFSELYTFKWT. Residues 989 to 1009 form a helical membrane-spanning segment; it reads TLLIPPTTLLLLNFIGVVAGV. Residues 1010-1020 lie on the Cytoplasmic side of the membrane; sequence SNAINNGYESW. Residues 1021–1041 traverse the membrane as a helical segment; sequence GPLFGKLFFAFWVIVHLYPFL. At 1042–1050 the chain is on the extracellular side; the sequence is KGLVGRQNR. The helical transmembrane segment at 1051-1071 threads the bilayer; that stretch reads TPTIVIVWSILLASIFSLLWV. Topologically, residues 1072 to 1093 are cytoplasmic; it reads RIDPFLAKNDGPLLEECGLDCN.

Belongs to the glycosyltransferase 2 family. Plant cellulose synthase subfamily. Mn(2+) serves as cofactor. Requires Zn(2+) as cofactor.

Its subcellular location is the cell membrane. It carries out the reaction [(1-&gt;4)-beta-D-glucosyl](n) + UDP-alpha-D-glucose = [(1-&gt;4)-beta-D-glucosyl](n+1) + UDP + H(+). It participates in glycan metabolism; plant cellulose biosynthesis. In terms of biological role, probable catalytic subunit of cellulose synthase terminal complexes ('rosettes'), required for beta-1,4-glucan microfibril crystallization, a major mechanism of the cell wall formation. The chain is Probable cellulose synthase A catalytic subunit 3 [UDP-forming] (CESA3) from Oryza sativa subsp. japonica (Rice).